We begin with the raw amino-acid sequence, 255 residues long: Ribonuclease HII (255 aa).

Residues 72 to 255 (RLIAGIDEVG…RTFAPIKDMI (184 aa)) form the RNase H type-2 domain. The a divalent metal cation site is built by Asp78, Glu79, and Asp170.

It belongs to the RNase HII family. Mn(2+) is required as a cofactor. Requires Mg(2+) as cofactor.

The protein resides in the cytoplasm. The catalysed reaction is Endonucleolytic cleavage to 5'-phosphomonoester.. Endonuclease that specifically degrades the RNA of RNA-DNA hybrids. This chain is Ribonuclease HII, found in Enterococcus faecalis (strain ATCC 700802 / V583).